Reading from the N-terminus, the 435-residue chain is Monodehydroascorbate reductase 3, cytosolic (435 aa).

FAD-binding positions include 14-17, glutamate 41, arginine 48, lysine 53, isoleucine 96, and 147-148; these read GGVA and RE. NAD(+)-binding positions include 172–178, glutamate 196, arginine 202, and glycine 261; that span reads GGYIGLE. An NADP(+)-binding site is contributed by 174-178; it reads YIGLE. The NADP(+) site is built by arginine 202 and glycine 261. Aspartate 298 provides a ligand contact to FAD. Residue 314–315 participates in NAD(+) binding; that stretch reads EH. 314 to 315 contributes to the NADP(+) binding site; that stretch reads EH. Valine 316 is an FAD binding site. Arginine 320 provides a ligand contact to L-ascorbate. Residue tyrosine 349 coordinates FAD. Tyrosine 349 is an NAD(+) binding site. Tyrosine 349 serves as a coordination point for NADP(+). Arginine 351 contacts L-ascorbate.

It belongs to the FAD-dependent oxidoreductase family. FAD serves as cofactor.

Its subcellular location is the cytoplasm. The catalysed reaction is 2 monodehydro-L-ascorbate radical + NADH + H(+) = 2 L-ascorbate + NAD(+). Catalyzes the conversion of monodehydroascorbate to ascorbate, oxidizing NADH in the process. Ascorbate is a major antioxidant against reactive oxygen species (ROS) and nitric oxide (NO). Can use NADPH as electron donor, but possesses lower activity compared to NADH as electron donor. The polypeptide is Monodehydroascorbate reductase 3, cytosolic (Oryza sativa subsp. japonica (Rice)).